A 291-amino-acid polypeptide reads, in one-letter code: NAD kinase (291 aa).

D73 (proton acceptor) is an active-site residue. Residues 73 to 74 (DG), 147 to 148 (ND), R175, D177, 188 to 193 (TAYALS), A212, and Q246 each bind NAD(+).

Belongs to the NAD kinase family. A divalent metal cation is required as a cofactor.

The protein resides in the cytoplasm. The catalysed reaction is NAD(+) + ATP = ADP + NADP(+) + H(+). Functionally, involved in the regulation of the intracellular balance of NAD and NADP, and is a key enzyme in the biosynthesis of NADP. Catalyzes specifically the phosphorylation on 2'-hydroxyl of the adenosine moiety of NAD to yield NADP. The sequence is that of NAD kinase from Polaromonas naphthalenivorans (strain CJ2).